The primary structure comprises 413 residues: Glycosyl hydrolase family 109 protein 2 (413 aa).

NAD(+) contacts are provided by residues 26–27 (NR), Asp48, 96–99 (WLTH), 116–117 (EV), and Asn145. Tyr174 contacts substrate. NAD(+) is bound by residues 191-195 (YHNHW) and Tyr208. Residues 208 to 211 (YPTH) and Tyr290 contribute to the substrate site.

It belongs to the Gfo/Idh/MocA family. Glycosyl hydrolase 109 subfamily. It depends on NAD(+) as a cofactor.

Functionally, glycosidase. This chain is Glycosyl hydrolase family 109 protein 2, found in Phocaeicola vulgatus (strain ATCC 8482 / DSM 1447 / JCM 5826 / CCUG 4940 / NBRC 14291 / NCTC 11154) (Bacteroides vulgatus).